The chain runs to 525 residues: Glutathione hydrolase-like YwrD proenzyme (525 aa).

Catalysis depends on Thr339, which acts as the Nucleophile.

Belongs to the gamma-glutamyltransferase family. This enzyme consists of two polypeptide chains, which are synthesized from a single polypeptide. Cleaved by autocatalysis into a large and a small subunit.

The enzyme catalyses an N-terminal (5-L-glutamyl)-[peptide] + an alpha-amino acid = 5-L-glutamyl amino acid + an N-terminal L-alpha-aminoacyl-[peptide]. It catalyses the reaction glutathione + H2O = L-cysteinylglycine + L-glutamate. It carries out the reaction an S-substituted glutathione + H2O = an S-substituted L-cysteinylglycine + L-glutamate. Its function is as follows. Overexpressed protein with an N-terminal His tag has been reported not to hydrolyze glutathione; it is not clear if the construct is processed to 2 subunits. The polypeptide is Glutathione hydrolase-like YwrD proenzyme (ywrD) (Bacillus subtilis (strain 168)).